The following is a 253-amino-acid chain: Transcription factor bHLH106 (253 aa).

Residues 66-115 (AALRNHKEAERRRRERINSHLNKLRNVLSCNSKTDKATLLAKVVQRVREL) enclose the bHLH domain.

As to quaternary structure, homodimer.

It is found in the nucleus. The sequence is that of Transcription factor bHLH106 (BHLH106) from Arabidopsis thaliana (Mouse-ear cress).